Consider the following 169-residue polypeptide: Sorting nexin-24 (169 aa).

M1 carries the post-translational modification N-acetylmethionine. One can recognise a PX domain in the interval 1 to 125 (MEVYIPSFRY…SFDETESEES (125 aa)). A 1,2-diacyl-sn-glycero-3-phospho-(1D-myo-inositol-3-phosphate) is bound by residues R38, S40, K61, and R74. A phosphoserine mark is found at S113 and S116.

The protein belongs to the sorting nexin family.

Its subcellular location is the cytoplasmic vesicle membrane. In terms of biological role, may be involved in several stages of intracellular trafficking. This Bos taurus (Bovine) protein is Sorting nexin-24 (SNX24).